The chain runs to 600 residues: Methionine--tRNA ligase (600 aa).

A 'HIGH' region motif is present at residues 12 to 22 (PYANGPRHIGH). Positions 144, 147, 157, and 160 each coordinate Zn(2+). A 'KMSKS' region motif is present at residues 351 to 355 (KFSSS). Ser354 is an ATP binding site.

This sequence belongs to the class-I aminoacyl-tRNA synthetase family. MetG type 1 subfamily. Monomer. The cofactor is Zn(2+).

The protein localises to the cytoplasm. The catalysed reaction is tRNA(Met) + L-methionine + ATP = L-methionyl-tRNA(Met) + AMP + diphosphate. Is required not only for elongation of protein synthesis but also for the initiation of all mRNA translation through initiator tRNA(fMet) aminoacylation. This Chloroflexus aggregans (strain MD-66 / DSM 9485) protein is Methionine--tRNA ligase.